A 234-amino-acid polypeptide reads, in one-letter code: Large ribosomal subunit protein uL1 (234 aa).

This sequence belongs to the universal ribosomal protein uL1 family. In terms of assembly, part of the 50S ribosomal subunit.

Its function is as follows. Binds directly to 23S rRNA. The L1 stalk is quite mobile in the ribosome, and is involved in E site tRNA release. In terms of biological role, protein L1 is also a translational repressor protein, it controls the translation of the L11 operon by binding to its mRNA. Functionally, peptides originating from the N-terminal end of L1 have antibacterial activity against bacteria such as E.coli and B.megaterium and modest antifungal activities. Has no effect on H.pylori itself. Peptides are not hemolytic against mammalian cells. These peptides may be released in the stomach during altruistic lysis to kill other fast growing bacteria. This is Large ribosomal subunit protein uL1 from Helicobacter pylori (strain ATCC 700392 / 26695) (Campylobacter pylori).